A 465-amino-acid chain; its full sequence is GDNF family receptor alpha-1 (465 aa).

An N-terminal signal peptide occupies residues 1 to 24 (MFLATLYFALPLLDLLLSAEVSGG). Repeat copies occupy residues 25-113 (DRLD…LQGN), 150-238 (KGNN…YEER), and 239-342 (EKPN…KNAI). A disulfide bridge links Cys36 with Cys42. Residue Asn59 is glycosylated (N-linked (GlcNAc...) asparagine). 10 cysteine pairs are disulfide-bonded: Cys154/Cys214, Cys161/Cys167, Cys178/Cys192, Cys187/Cys233, Cys216/Cys221, Cys243/Cys313, Cys250/Cys256, Cys267/Cys285, Cys277/Cys337, and Cys315/Cys325. N-linked (GlcNAc...) asparagine glycans are attached at residues Asn347 and Asn406. The GPI-anchor amidated serine moiety is linked to residue Ser429. The propeptide at 430–465 (HITTKSMAAPPSCGLSPLLVLVVTALSTLLSLTETS) is removed in mature form.

Belongs to the GDNFR family. In terms of assembly, interacts with GDNF ligand and RET: forms a 2:2:2 ternary complex composed of GDNF ligand, GFRA1 and RET receptor. Interacts with SORL1, either alone or in complex with GDNF. Interaction between SORL1 and GFRA1 leads to GFRA1 internalization, but not degradation.

It localises to the cell membrane. It is found in the golgi apparatus. The protein resides in the trans-Golgi network. Its subcellular location is the endosome. The protein localises to the multivesicular body. In terms of biological role, coreceptor for GDNF, a neurotrophic factor that enhances survival and morphological differentiation of dopaminergic neurons and increases their high-affinity dopamine uptake. GDNF-binding leads to autophosphorylation and activation of the RET receptor. This Homo sapiens (Human) protein is GDNF family receptor alpha-1 (GFRA1).